The sequence spans 437 residues: Double-stranded RNA-binding protein 3 (437 aa).

Residues 1 to 22 (MKKKSAPTPLPPETANTSPAPI) are disordered. DRBM domains are found at residues 35-104 (VFKS…EIVK) and 120-187 (LCKN…AIQG). Basic and acidic residues-rich tracts occupy residues 288–310 (AKRV…ENQH) and 320–330 (DEARVEQEPSR). Residues 288 to 331 (AKRVEDEPPRDIEMVQPDKENQHSDAALVQPDDEARVEQEPSRD) are disordered.

Functionally, binds double-stranded RNA. This is Double-stranded RNA-binding protein 3 (DRB3) from Oryza sativa subsp. japonica (Rice).